A 358-amino-acid chain; its full sequence is Cyanide hydratase (358 aa).

One can recognise a CN hydrolase domain in the interval 8–287 (YKAAAVNAEP…QGLLFVDIDL (280 aa)). Residue Glu48 is the Proton acceptor of the active site. Residue Lys130 is part of the active site. The Nucleophile role is filled by Cys165.

Belongs to the carbon-nitrogen hydrolase superfamily. Nitrilase family. In terms of assembly, oligomer of dimers, forming left-handed helical fibers.

It catalyses the reaction formamide = hydrogen cyanide + H2O. Catalyzes the hydration of cyanide to formamide. Degradation of cyanide may be important for plant pathogenic fungi in infection of cyanogenic plants. This is Cyanide hydratase from Penicillium rubens (strain ATCC 28089 / DSM 1075 / NRRL 1951 / Wisconsin 54-1255) (Penicillium chrysogenum).